A 94-amino-acid chain; its full sequence is Small ribosomal subunit protein bS6 (94 aa).

The protein belongs to the bacterial ribosomal protein bS6 family.

Binds together with bS18 to 16S ribosomal RNA. The protein is Small ribosomal subunit protein bS6 of Alkaliphilus metalliredigens (strain QYMF).